A 988-amino-acid chain; its full sequence is Exportin-T (988 aa).

Belongs to the exportin family. As to expression, expressed in young leaves, growing leaf blades, young floral organs and root tips.

It localises to the nucleus. The protein resides in the cytoplasm. Functionally, probable tRNA nucleus export receptor which regulates tRNA processing and facilitates tRNA translocation across the nuclear pore complex. Is required for proper activity of the shoot apical meristem (SAM) and correct leaf initiation at different developmental stages, and may play a role in floral patterning. The sequence is that of Exportin-T (PSD) from Arabidopsis thaliana (Mouse-ear cress).